A 68-amino-acid polypeptide reads, in one-letter code: Protein transport protein Sec61 subunit gamma (68 aa).

Residues 1-32 (MDQIMQFVEPSRQFVKDSIRLVKRCTKPDRKE) are Cytoplasmic-facing. A helical transmembrane segment spans residues 33 to 61 (FQKIAMATAIGFAIMGFIGFFVKLIHIPI). Residues 62–68 (NNIIVGG) are Extracellular-facing.

Belongs to the SecE/SEC61-gamma family. As to quaternary structure, the SEC61 channel-forming translocon complex consists of channel-forming core components SEC61A1, SEC61B and SEC61G and different auxiliary components such as SEC62 and SEC63. The SEC61 channel associates with the multi-pass translocon (MPT) complex.

The protein resides in the endoplasmic reticulum membrane. Functionally, component of SEC61 channel-forming translocon complex that mediates transport of signal peptide-containing precursor polypeptides across the endoplasmic reticulum (ER). Forms a ribosome receptor and a gated pore in the ER membrane, both functions required for cotranslational translocation of nascent polypeptides. The SEC61 channel is also involved in ER membrane insertion of transmembrane proteins: it mediates membrane insertion of the first few transmembrane segments of proteins, while insertion of subsequent transmembrane regions of multi-pass membrane proteins is mediated by the multi-pass translocon (MPT) complex. This is Protein transport protein Sec61 subunit gamma (sec61g) from Gadus morhua (Atlantic cod).